A 283-amino-acid chain; its full sequence is Bifunctional protein FolD (283 aa).

Residues 165–167 (GRS), Ser190, and Ile231 each bind NADP(+).

This sequence belongs to the tetrahydrofolate dehydrogenase/cyclohydrolase family. Homodimer.

The catalysed reaction is (6R)-5,10-methylene-5,6,7,8-tetrahydrofolate + NADP(+) = (6R)-5,10-methenyltetrahydrofolate + NADPH. It carries out the reaction (6R)-5,10-methenyltetrahydrofolate + H2O = (6R)-10-formyltetrahydrofolate + H(+). It participates in one-carbon metabolism; tetrahydrofolate interconversion. In terms of biological role, catalyzes the oxidation of 5,10-methylenetetrahydrofolate to 5,10-methenyltetrahydrofolate and then the hydrolysis of 5,10-methenyltetrahydrofolate to 10-formyltetrahydrofolate. This is Bifunctional protein FolD from Herminiimonas arsenicoxydans.